The sequence spans 345 residues: Anthranilate phosphoribosyltransferase (345 aa).

Residues glycine 81, 84–85 (GD), serine 89, 91–94 (NVST), 109–117 (KHGNRAATS), and alanine 121 each bind 5-phospho-alpha-D-ribose 1-diphosphate. Glycine 81 contacts anthranilate. Serine 93 lines the Mg(2+) pocket. Asparagine 112 serves as a coordination point for anthranilate. Arginine 167 lines the anthranilate pocket. Positions 226 and 227 each coordinate Mg(2+).

It belongs to the anthranilate phosphoribosyltransferase family. Homodimer. Mg(2+) serves as cofactor.

The catalysed reaction is N-(5-phospho-beta-D-ribosyl)anthranilate + diphosphate = 5-phospho-alpha-D-ribose 1-diphosphate + anthranilate. It participates in amino-acid biosynthesis; L-tryptophan biosynthesis; L-tryptophan from chorismate: step 2/5. Its function is as follows. Catalyzes the transfer of the phosphoribosyl group of 5-phosphorylribose-1-pyrophosphate (PRPP) to anthranilate to yield N-(5'-phosphoribosyl)-anthranilate (PRA). The chain is Anthranilate phosphoribosyltransferase from Methylobacterium radiotolerans (strain ATCC 27329 / DSM 1819 / JCM 2831 / NBRC 15690 / NCIMB 10815 / 0-1).